The sequence spans 403 residues: Chromatin structure-remodeling complex subunit SFH1 (403 aa).

Positions 58-115 are disordered; the sequence is FPTFDIDSDSNDEEQSSASAGNDDPQANANGGEAAGVNGQGSGDGGSANTGAGRHGKS. A compositionally biased stretch (acidic residues) spans 63–72; the sequence is IDSDSNDEEQ. Residues 84–94 show a composition bias toward low complexity; that stretch reads ANANGGEAAGV. Over residues 95–105 the composition is skewed to gly residues; sequence NGQGSGDGGSA.

This sequence belongs to the SNF5 family.

It is found in the nucleus. Part of the chromatin structure-remodeling complex (RSC) which is involved in transcription regulation and nucleosome positioning. RSC is responsible for the transfer of a histone octamer from a nucleosome core particle to naked DNA. The reaction requires ATP and involves an activated RSC-nucleosome intermediate. Remodeling reaction also involves DNA translocation, DNA twist and conformational change. As a reconfigurer of centromeric and flanking nucleosomes, RSC complex is required both for proper kinetochore function in chromosome segregation and, via a PKC1-dependent signaling pathway, for organization of the cellular cytoskeleton. This subunit is essential for mitotic growth and required for cell cycle progression. The polypeptide is Chromatin structure-remodeling complex subunit SFH1 (SFH1) (Candida glabrata (strain ATCC 2001 / BCRC 20586 / JCM 3761 / NBRC 0622 / NRRL Y-65 / CBS 138) (Yeast)).